An 88-amino-acid chain; its full sequence is MIEDIKGYKPHTEEKIGKVNAIKDAEVRLGLIFDALYDEFWEALDNCEDCEFAKNYAESLDQLTIAKTKLKEASMWACRAVFQPEEKY.

Tyr-8, Lys-9, His-11, Lys-23, Arg-79, and Phe-82 together coordinate 3',3'-cGAMP.

Belongs to the Acb2 family. Homohexamer when bound to 3',3'-cGAMP.

In terms of biological role, antagonizes CBASS (cyclic oligonucleotide-based antiphage signaling system). Binds and sequesters host-produced 3',3'-cyclic GMP-AMP (cGAMP) with a dissociation constant of about 30 nM; each homohexamer binds 3 cGAMP molecules with 1 cGAMP molecule binding to 2 monomers. Sequestration of cGAMP inhibits the cGAMP-activated phospholipase activity of host CBASS effector protein CapV. The protein is Anti-CBASS protein 2 of Enterobacteria phage T4 (Bacteriophage T4).